The sequence spans 369 residues: Anhydro-N-acetylmuramic acid kinase (369 aa).

12–19 serves as a coordination point for ATP; that stretch reads GTSLDGVD.

This sequence belongs to the anhydro-N-acetylmuramic acid kinase family.

The catalysed reaction is 1,6-anhydro-N-acetyl-beta-muramate + ATP + H2O = N-acetyl-D-muramate 6-phosphate + ADP + H(+). Its pathway is amino-sugar metabolism; 1,6-anhydro-N-acetylmuramate degradation. It participates in cell wall biogenesis; peptidoglycan recycling. Catalyzes the specific phosphorylation of 1,6-anhydro-N-acetylmuramic acid (anhMurNAc) with the simultaneous cleavage of the 1,6-anhydro ring, generating MurNAc-6-P. Is required for the utilization of anhMurNAc either imported from the medium or derived from its own cell wall murein, and thus plays a role in cell wall recycling. The chain is Anhydro-N-acetylmuramic acid kinase from Escherichia coli O1:K1 / APEC.